The primary structure comprises 668 residues: MKHYSIQPANLEFNAEGTPVSRDFDDVYFSNDNGLEETRYVFLGGNHLEARFPEHPHPLFVVAESGFGTGLNFLTLWQAFDQFREAHPQAQLQRLHFISFEKFPLTRADLALAHQHWPELAPWAEQLQAQWPLPLPGCHRLLLDEGRITLDLWFGDINELTSQLDDSLNQKVDAWFLDGFAPAKNPDMWTQNLFNAMARLARPGSTLATFTSAGFVRRGLQEAGFTMQKRKGFGRKREMLCGVMEQTLPLPCSTPWFNRTGSNKQEAAIIGGGIASALLSLALLRRGWQVTLYCADEAPALGASGNRQGALYPLLSKHDEALNRFFSNAFTFARRFYDLLPVKFDHDWCGVTQLGWDEKSQHKIAQMLSMDLPAELAVAVEANAVEQITGVATNCSGITYPQGGWLCPAELTRNVLKLAQQQGLQIHYQYQLQDLSRKDDGWLLNFAGDQQATHSVVVLANGHQISRFSQTSSLPVYSVAGQVSHIPTTPELAELKQVLCYDGYLTPQNTANQHHCIGASYHRGSEETAYSDEDQQQNRQRLIDCFPHAQWAKEVDVSGKEARCGVRCATRDHLPMVGNVPDYDATLVEYASLAEKKDEAVSAPVYDDLFMFAALGSRGLCSAPLCAEILAAQMSEEPIPMDASTLAALNPNRLWVRKLLKGKAVKAG.

The tract at residues 1 to 245 (MKHYSIQPAN…KREMLCGVME (245 aa)) is tRNA (mnm(5)s(2)U34)-methyltransferase. The interval 270–668 (IGGGIASALL…LLKGKAVKAG (399 aa)) is FAD-dependent cmnm(5)s(2)U34 oxidoreductase.

It in the N-terminal section; belongs to the methyltransferase superfamily. tRNA (mnm(5)s(2)U34)-methyltransferase family. The protein in the C-terminal section; belongs to the DAO family. It depends on FAD as a cofactor.

The protein resides in the cytoplasm. It catalyses the reaction 5-aminomethyl-2-thiouridine(34) in tRNA + S-adenosyl-L-methionine = 5-methylaminomethyl-2-thiouridine(34) in tRNA + S-adenosyl-L-homocysteine + H(+). Its function is as follows. Catalyzes the last two steps in the biosynthesis of 5-methylaminomethyl-2-thiouridine (mnm(5)s(2)U) at the wobble position (U34) in tRNA. Catalyzes the FAD-dependent demodification of cmnm(5)s(2)U34 to nm(5)s(2)U34, followed by the transfer of a methyl group from S-adenosyl-L-methionine to nm(5)s(2)U34, to form mnm(5)s(2)U34. This Escherichia coli (strain UTI89 / UPEC) protein is tRNA 5-methylaminomethyl-2-thiouridine biosynthesis bifunctional protein MnmC.